The primary structure comprises 327 residues: Complex I intermediate-associated protein 30, mitochondrial (327 aa).

Residues 1 to 24 (MALVHKLLRGTYFLRKFSKPTSAL) constitute a mitochondrion transit peptide. The segment at 42 to 63 (PVASPGKASSQRKTEGDLQGDH) is disordered. A compositionally biased stretch (basic and acidic residues) spans 53-63 (RKTEGDLQGDH). Residue S318 is modified to Phosphoserine.

It belongs to the CIA30 family. In terms of assembly, part of the mitochondrial complex I assembly/MCIA complex that comprises at least the core subunits TMEM126B, NDUFAF1, ECSIT and ACAD9 and complement subunits such as COA1 and TMEM186. Interacts with ECSIT. Interacts with ACAD9. At early stages of complex I assembly, it is found in intermediate subcomplexes that contain different subunits including NDUFB6, NDUFA6, NDUFA9, NDUFS3, NDUFS7, ND1, ND2 and ND3. Interacts with TMEM70 and TMEM242. As to expression, ubiquitous.

Its subcellular location is the mitochondrion. It is found in the mitochondrion matrix. Functionally, as part of the MCIA complex, involved in the assembly of the mitochondrial complex I. This Homo sapiens (Human) protein is Complex I intermediate-associated protein 30, mitochondrial.